The primary structure comprises 273 residues: Tyrosinase (273 aa).

Cu cation-binding residues include H38, H54, H63, H190, H194, and H216.

It belongs to the tyrosinase family. The cofactor is Cu(2+).

It catalyses the reaction 2 L-dopa + O2 = 2 L-dopaquinone + 2 H2O. It carries out the reaction L-tyrosine + O2 = L-dopaquinone + H2O. This is a copper-containing oxidase that functions in the formation of pigments such as melanins and other polyphenolic compounds. This is Tyrosinase (melC2) from Streptomyces antibioticus.